The primary structure comprises 477 residues: 3-isopropylmalate dehydratase large subunit (477 aa).

Residues Cys-352, Cys-413, and Cys-416 each contribute to the [4Fe-4S] cluster site.

It belongs to the aconitase/IPM isomerase family. LeuC type 1 subfamily. In terms of assembly, heterodimer of LeuC and LeuD. [4Fe-4S] cluster is required as a cofactor.

The enzyme catalyses (2R,3S)-3-isopropylmalate = (2S)-2-isopropylmalate. Its pathway is amino-acid biosynthesis; L-leucine biosynthesis; L-leucine from 3-methyl-2-oxobutanoate: step 2/4. Catalyzes the isomerization between 2-isopropylmalate and 3-isopropylmalate, via the formation of 2-isopropylmaleate. The protein is 3-isopropylmalate dehydratase large subunit of Pseudomonas putida (strain W619).